A 366-amino-acid chain; its full sequence is 1-aminocyclopropane-1-carboxylate oxidase homolog 12 (366 aa).

Residues 215–314 form the Fe2OG dioxygenase domain; that stretch reads KTLLMICHYY…RISVASFFSS (100 aa). The Fe cation site is built by H239, D241, and H295. Residue R305 coordinates 2-oxoglutarate.

Belongs to the iron/ascorbate-dependent oxidoreductase family. Fe(2+) is required as a cofactor.

The protein is 1-aminocyclopropane-1-carboxylate oxidase homolog 12 of Arabidopsis thaliana (Mouse-ear cress).